Here is a 1010-residue protein sequence, read N- to C-terminus: Trifunctional purine biosynthetic protein adenosine-3 (1010 aa).

N-acetylalanine is present on Ala2. The ATP-grasp domain occupies 111-318; it reads KEFMDRHGIS…LYEVIQSILD (208 aa). ATP is bound by residues 190–193, Glu197, Arg220, and Asn229; that span reads EELL. Residues Glu288 and Asn290 each contribute to the Mg(2+) site. Lys350 carries the N6-acetyllysine modification. Residues 434–809 are AIRS domain; sequence GLTYKESGVD…HFSVQPKKAR (376 aa). A Phosphoserine modification is found at Ser440. Thr682 bears the Phosphothreonine mark. Ser802 bears the Phosphoserine mark. Residues 810–1010 are GART domain; the sequence is VAVLISGTGS…NGRICWVTED (201 aa). 818–820 is a N(1)-(5-phospho-beta-D-ribosyl)glycinamide binding site; it reads GSN. (6R)-10-formyltetrahydrofolate contacts are provided by residues Arg871, 896–899, and Asn913; that span reads MRIL. The active-site Proton donor is His915. 947 to 951 serves as a coordination point for (6R)-10-formyltetrahydrofolate; that stretch reads AEDVD. N(1)-(5-phospho-beta-D-ribosyl)glycinamide is bound at residue 977-980; the sequence is KLAE.

The protein in the N-terminal section; belongs to the GARS family. This sequence in the central section; belongs to the AIR synthase family. In the C-terminal section; belongs to the GART family. Homodimer. It depends on Mg(2+) as a cofactor. Mn(2+) serves as cofactor.

It carries out the reaction 5-phospho-beta-D-ribosylamine + glycine + ATP = N(1)-(5-phospho-beta-D-ribosyl)glycinamide + ADP + phosphate + H(+). It catalyses the reaction 2-formamido-N(1)-(5-O-phospho-beta-D-ribosyl)acetamidine + ATP = 5-amino-1-(5-phospho-beta-D-ribosyl)imidazole + ADP + phosphate + H(+). The enzyme catalyses N(1)-(5-phospho-beta-D-ribosyl)glycinamide + (6R)-10-formyltetrahydrofolate = N(2)-formyl-N(1)-(5-phospho-beta-D-ribosyl)glycinamide + (6S)-5,6,7,8-tetrahydrofolate + H(+). Its pathway is purine metabolism; IMP biosynthesis via de novo pathway; 5-amino-1-(5-phospho-D-ribosyl)imidazole from N(2)-formyl-N(1)-(5-phospho-D-ribosyl)glycinamide: step 2/2. It functions in the pathway purine metabolism; IMP biosynthesis via de novo pathway; N(1)-(5-phospho-D-ribosyl)glycinamide from 5-phospho-alpha-D-ribose 1-diphosphate: step 2/2. The protein operates within purine metabolism; IMP biosynthesis via de novo pathway; N(2)-formyl-N(1)-(5-phospho-D-ribosyl)glycinamide from N(1)-(5-phospho-D-ribosyl)glycinamide (10-formyl THF route): step 1/1. In terms of biological role, trifunctional enzyme that catalyzes three distinct reactions as part of the 'de novo' inosine monophosphate biosynthetic pathway. The protein is Trifunctional purine biosynthetic protein adenosine-3 (GART) of Bos taurus (Bovine).